Consider the following 114-residue polypeptide: uncharacterized protein (114 aa).

One can recognise an ABM domain in the interval 13 to 99; it reads YYAVIFSSVK…VWYESYAVRV (87 aa).

This is an uncharacterized protein from Bacillus subtilis (strain 168).